Here is a 340-residue protein sequence, read N- to C-terminus: TD and POZ domain-containing protein 5 (340 aa).

The MATH domain occupies 19-149 (EFCYVWTIRN…ENKLTLCCKV (131 aa)). The BTB domain occupies 188–255 (TDCCLLVAGH…IYTGKAPHLQ (68 aa)).

Belongs to the Tdpoz family.

This chain is TD and POZ domain-containing protein 5, found in Mus musculus (Mouse).